Reading from the N-terminus, the 503-residue chain is Maturase K (503 aa).

Belongs to the intron maturase 2 family. MatK subfamily.

The protein resides in the plastid. It localises to the chloroplast. Usually encoded in the trnK tRNA gene intron. Probably assists in splicing its own and other chloroplast group II introns. The sequence is that of Maturase K from Backhousia myrtifolia (Grey myrtle).